A 99-amino-acid polypeptide reads, in one-letter code: uncharacterized protein (99 aa).

This is an uncharacterized protein from Bacillus subtilis (strain 168).